A 109-amino-acid chain; its full sequence is Ribonuclease P protein component (109 aa).

This sequence belongs to the RnpA family. Consists of a catalytic RNA component (M1 or rnpB) and a protein subunit.

The catalysed reaction is Endonucleolytic cleavage of RNA, removing 5'-extranucleotides from tRNA precursor.. Functionally, RNaseP catalyzes the removal of the 5'-leader sequence from pre-tRNA to produce the mature 5'-terminus. It can also cleave other RNA substrates such as 4.5S RNA. The protein component plays an auxiliary but essential role in vivo by binding to the 5'-leader sequence and broadening the substrate specificity of the ribozyme. The polypeptide is Ribonuclease P protein component (Mycoplasma capricolum subsp. capricolum (strain California kid / ATCC 27343 / NCTC 10154)).